The primary structure comprises 616 residues: Dihydroxy-acid dehydratase (616 aa).

Residue aspartate 81 coordinates Mg(2+). Cysteine 122 contributes to the [2Fe-2S] cluster binding site. The Mg(2+) site is built by aspartate 123 and lysine 124. Lysine 124 is subject to N6-carboxylysine. Position 195 (cysteine 195) interacts with [2Fe-2S] cluster. Glutamate 491 lines the Mg(2+) pocket. Catalysis depends on serine 517, which acts as the Proton acceptor.

It belongs to the IlvD/Edd family. In terms of assembly, homodimer. [2Fe-2S] cluster serves as cofactor. Mg(2+) is required as a cofactor.

The catalysed reaction is (2R)-2,3-dihydroxy-3-methylbutanoate = 3-methyl-2-oxobutanoate + H2O. It catalyses the reaction (2R,3R)-2,3-dihydroxy-3-methylpentanoate = (S)-3-methyl-2-oxopentanoate + H2O. It functions in the pathway amino-acid biosynthesis; L-isoleucine biosynthesis; L-isoleucine from 2-oxobutanoate: step 3/4. Its pathway is amino-acid biosynthesis; L-valine biosynthesis; L-valine from pyruvate: step 3/4. Functions in the biosynthesis of branched-chain amino acids. Catalyzes the dehydration of (2R,3R)-2,3-dihydroxy-3-methylpentanoate (2,3-dihydroxy-3-methylvalerate) into 2-oxo-3-methylpentanoate (2-oxo-3-methylvalerate) and of (2R)-2,3-dihydroxy-3-methylbutanoate (2,3-dihydroxyisovalerate) into 2-oxo-3-methylbutanoate (2-oxoisovalerate), the penultimate precursor to L-isoleucine and L-valine, respectively. The sequence is that of Dihydroxy-acid dehydratase from Salmonella dublin (strain CT_02021853).